A 134-amino-acid polypeptide reads, in one-letter code: Cytochrome b5 isoform E (134 aa).

Positions 5–81 constitute a Cytochrome b5 heme-binding domain; the sequence is RKVLSFEEVS…MDKYFIGEID (77 aa). Heme is bound by residues His-40 and His-64. The chain crosses the membrane as a helical span at residues 107–127; sequence FIIKILQFLVPILILGLALVV. An AKR2A-binding sequence (ABS) required for endoplasmic reticulum membrane targeting motif is present at residues 128–134; sequence RHYTKKD.

Belongs to the cytochrome b5 family. As to quaternary structure, interacts with CER1, BI-1, FAH1 and FAH2. Interacts with AKR2A. As to expression, expressed in roots, stems, leaves, flowers and siliques.

It localises to the cell membrane. The protein resides in the endoplasmic reticulum membrane. Its function is as follows. Membrane bound hemoprotein which function as an electron carrier for several membrane bound oxygenases, including fatty acid desaturases. The chain is Cytochrome b5 isoform E (CYTB5-E) from Arabidopsis thaliana (Mouse-ear cress).